The following is a 278-amino-acid chain: Tropomyosin A (278 aa).

Residues 1–270 (IMMAMKLEKE…YRAISGELDT (270 aa)) adopt a coiled-coil conformation. The interval 92 to 134 (DFEQSSGRLTETSTKLDDASKAAEESERNRKTLETRSISDDER) is disordered. The segment covering 95-104 (QSSGRLTETS) has biased composition (polar residues). Residues 105-134 (TKLDDASKAAEESERNRKTLETRSISDDER) show a composition bias toward basic and acidic residues.

Belongs to the tropomyosin family. In terms of assembly, homodimer.

Its function is as follows. Tropomyosin, in association with the troponin complex, plays a central role in the calcium dependent regulation of muscle contraction. This is Tropomyosin A from Echinococcus granulosus (Hydatid tapeworm).